Reading from the N-terminus, the 359-residue chain is 3-dehydroquinate synthase (359 aa).

Residues 71–76 (DGEAHK), 105–109 (GVIGD), 129–130 (TT), lysine 142, lysine 151, and 169–172 (TLHT) contribute to the NAD(+) site. Zn(2+) is bound by residues glutamate 184, histidine 247, and histidine 264.

The protein belongs to the sugar phosphate cyclases superfamily. Dehydroquinate synthase family. Requires Co(2+) as cofactor. It depends on Zn(2+) as a cofactor. NAD(+) serves as cofactor.

Its subcellular location is the cytoplasm. The enzyme catalyses 7-phospho-2-dehydro-3-deoxy-D-arabino-heptonate = 3-dehydroquinate + phosphate. Its pathway is metabolic intermediate biosynthesis; chorismate biosynthesis; chorismate from D-erythrose 4-phosphate and phosphoenolpyruvate: step 2/7. In terms of biological role, catalyzes the conversion of 3-deoxy-D-arabino-heptulosonate 7-phosphate (DAHP) to dehydroquinate (DHQ). This is 3-dehydroquinate synthase from Neisseria meningitidis serogroup C (strain 053442).